A 581-amino-acid polypeptide reads, in one-letter code: Dehydrocurvularin exporter (581 aa).

A compositionally biased stretch (polar residues) spans 1–10 (MTDSPSLESN). The tract at residues 1-47 (MTDSPSLESNNKSDMDTPRPPASSHDEHDAAESVSEKQDSATTSPTG) is disordered. N11 carries an N-linked (GlcNAc...) asparagine glycan. A compositionally biased stretch (basic and acidic residues) spans 24-39 (SHDEHDAAESVSEKQD). 14 consecutive transmembrane segments (helical) span residues 61-81 (LVMFTIFVSTILVSLEIGIIA), 96-116 (DVGWYGSATFILAAAASPLWG), 126-146 (WVYLSAVGIFLVGSIVAAAAP), 159-179 (GWGASGVLGGTLIVINYVAPP), 184-204 (LLIGTWMAVFMMSTILGPVIG), 215-235 (WCFWINLPVGGPIVVLLLLFL), 251-271 (IILNLDIPGFCLLLVSLVCLT), 288-308 (VIATLVLWILLTIGFFIVEWL), 330-350 (IFCLVSYAALYQVMFYLPIYF), 363-383 (VNTLPFLAFFALGAMVSGGAI), 392-412 (YELAGALIMTAGMALIYILDV), 424-444 (VLFGFGIGLCNQVPMTAVQGF), 456-476 (IMVMCQTLSGAYFVAIAQSLF), and 527-547 (VFAFSLACAAFSVILTALIPF). The segment at 552–581 (DHEKKPSKDAMASDEVKASEEVQQEKKVTV) is disordered. The span at 565-581 (DEVKASEEVQQEKKVTV) shows a compositional bias: basic and acidic residues.

This sequence belongs to the major facilitator superfamily. TCR/Tet family.

The protein resides in the cell membrane. Efflux pump that is probably involved in the export of dehydrocurvularin. This chain is Dehydrocurvularin exporter, found in Alternaria cinerariae.